Here is a 330-residue protein sequence, read N- to C-terminus: Probable ADP,ATP carrier protein At5g56450 (330 aa).

The segment covering Met-1 to Asp-10 has biased composition (acidic residues). Positions Met-1–Ser-22 are disordered. 6 helical membrane passes run Leu-27–Gln-61, Gly-103–Leu-127, Ile-137–Ala-171, Gly-203–Ser-230, Glu-236–Gln-270, and Gly-300–Leu-325. Solcar repeat units lie at residues Lys-28 to Ile-126, Ser-139 to Ile-228, and Lys-241 to Phe-324. ADP is bound by residues Arg-108 and Lys-120. An ADP-binding site is contributed by Arg-264. Residues Arg-264–Met-269 carry the Substrate recognition motif.

Belongs to the mitochondrial carrier (TC 2.A.29) family. As to quaternary structure, monomer.

The protein localises to the membrane. The catalysed reaction is ADP(in) + ATP(out) = ADP(out) + ATP(in). ADP:ATP antiporter that catalyzes the exchange of ADP and ATP across the membrane. In Arabidopsis thaliana (Mouse-ear cress), this protein is Probable ADP,ATP carrier protein At5g56450.